Here is a 294-residue protein sequence, read N- to C-terminus: MKIAVFGQFYQNSTSPIIARLFAFLNQNNIQVVIEEKFAAILIENKSIANTYQKFSSHKDLDKSFEMLISVGGDGTFLRATTLVRNSGIPILGINAGRLGFLATVQQENIETFLQLVLEKKYTISKRTLLSLKCASKIEEIKDLNFAMNEITVSRKDTTSMITIETYLNGEYLNSYWADGLIISTPTGSTGYSMSCGGPILTPEANCLVITPIAPHNLNARPLVIPDNTEIKLKVSGREENYLVSLDSRIASVKNEDILTIKKTPFKINMIEIPEETFLKTLRNKLLWGEDKRN.

Asp74 (proton acceptor) is an active-site residue. Residues 74-75, Arg79, 149-150, Asp179, 190-195, and Ala214 each bind NAD(+); these read DG, NE, and TGYSMS.

The protein belongs to the NAD kinase family. The cofactor is a divalent metal cation.

The protein localises to the cytoplasm. It catalyses the reaction NAD(+) + ATP = ADP + NADP(+) + H(+). Functionally, involved in the regulation of the intracellular balance of NAD and NADP, and is a key enzyme in the biosynthesis of NADP. Catalyzes specifically the phosphorylation on 2'-hydroxyl of the adenosine moiety of NAD to yield NADP. This Flavobacterium psychrophilum (strain ATCC 49511 / DSM 21280 / CIP 103535 / JIP02/86) protein is NAD kinase.